The sequence spans 211 residues: Beta-crystallin B3 (211 aa).

Position 1 is an N-acetylmethionine (Met-1). Ala-2 bears the N-acetylalanine; in Beta-crystallin B3, N-terminally processed mark. The tract at residues 2–23 (AEQHSTPEQAAAGKSHGGLGGS) is N-terminal arm. 2 Beta/gamma crystallin 'Greek key' domains span residues 24-63 (YKVI…QVES) and 64-108 (GPWL…RPLH). The segment at 109–113 (IDGPD) is connecting peptide. Beta/gamma crystallin 'Greek key' domains lie at 114–155 (HKLH…RAIN) and 156–198 (GTWV…RRIR). The segment at 200–211 (QKWHKRGVFLSS) is C-terminal arm.

This sequence belongs to the beta/gamma-crystallin family. In terms of assembly, homo/heterodimer, or complexes of higher-order. The structure of beta-crystallin oligomers seems to be stabilized through interactions between the N-terminal arms.

Its function is as follows. Crystallins are the dominant structural components of the vertebrate eye lens. This is Beta-crystallin B3 (CRYBB3) from Bos taurus (Bovine).